The sequence spans 101 residues: Putative pterin-4-alpha-carbinolamine dehydratase (101 aa).

The protein belongs to the pterin-4-alpha-carbinolamine dehydratase family.

It carries out the reaction (4aS,6R)-4a-hydroxy-L-erythro-5,6,7,8-tetrahydrobiopterin = (6R)-L-erythro-6,7-dihydrobiopterin + H2O. In Nitrobacter winogradskyi (strain ATCC 25391 / DSM 10237 / CIP 104748 / NCIMB 11846 / Nb-255), this protein is Putative pterin-4-alpha-carbinolamine dehydratase.